The sequence spans 156 residues: ATP synthase subunit b 2 (156 aa).

A helical transmembrane segment spans residues 6–26 (SMFGQAISFVIFVWLCMKYVW).

It belongs to the ATPase B chain family. In terms of assembly, F-type ATPases have 2 components, F(1) - the catalytic core - and F(0) - the membrane proton channel. F(1) has five subunits: alpha(3), beta(3), gamma(1), delta(1), epsilon(1). F(0) has three main subunits: a(1), b(2) and c(10-14). The alpha and beta chains form an alternating ring which encloses part of the gamma chain. F(1) is attached to F(0) by a central stalk formed by the gamma and epsilon chains, while a peripheral stalk is formed by the delta and b chains.

The protein localises to the cell inner membrane. Functionally, f(1)F(0) ATP synthase produces ATP from ADP in the presence of a proton or sodium gradient. F-type ATPases consist of two structural domains, F(1) containing the extramembraneous catalytic core and F(0) containing the membrane proton channel, linked together by a central stalk and a peripheral stalk. During catalysis, ATP synthesis in the catalytic domain of F(1) is coupled via a rotary mechanism of the central stalk subunits to proton translocation. Component of the F(0) channel, it forms part of the peripheral stalk, linking F(1) to F(0). This Vibrio campbellii (strain ATCC BAA-1116) protein is ATP synthase subunit b 2.